Reading from the N-terminus, the 244-residue chain is Monothiol glutaredoxin-4 (244 aa).

The 105-residue stretch at 2–106 (SVEITFVEQF…LKAAIDEYIQ (105 aa)) folds into the Thioredoxin domain. One can recognise a Glutaredoxin domain in the interval 147–244 (NERLSTLTNA…NGELQEMLPN (98 aa)). A glutathione-binding site is contributed by K164. Residue C172 coordinates [2Fe-2S] cluster. Glutathione contacts are provided by residues 201–205 (RQGLK) and 226–227 (LD).

The protein belongs to the glutaredoxin family. Monothiol subfamily. Homodimer. Interacts with php4.

Its subcellular location is the cytoplasm. It is found in the nucleus. Monothiol glutaredoxin involved in the biogenesis of iron-sulfur clusters. Binds one iron-sulfur cluster per dimer. The iron-sulfur cluster is bound between subunits, and is complexed by a bound glutathione and a cysteine residue from each subunit. This is Monothiol glutaredoxin-4 (grx4) from Schizosaccharomyces pombe (strain 972 / ATCC 24843) (Fission yeast).